A 250-amino-acid chain; its full sequence is Probable aquaporin TIP-type (250 aa).

2 consecutive transmembrane segments (helical) span residues 20-42 and 55-77; these read AYVA…AIAY and GLVA…AANV. An NPA 1 motif is present at residues 83–85; sequence NPA. A run of 3 helical transmembrane segments spans residues 97-119, 140-162, and 172-194; these read TILT…CLLL, IQGV…ATAA, and IAPI…FSGG. Positions 197 to 199 match the NPA 2 motif; it reads NPA. A helical transmembrane segment spans residues 215-237; the sequence is WIYWAGPLIGGALAGFIYGDVFI.

Belongs to the MIP/aquaporin (TC 1.A.8) family. TIP (TC 1.A.8.10) subfamily. In terms of tissue distribution, expressed in mature seeds and dark-grown seedlings.

The protein resides in the vacuole membrane. Its function is as follows. Channel protein in tonoplast. These proteins may allow the diffusion of amino acids and/or peptides from the vacuolar compartment to the cytoplasm. The chain is Probable aquaporin TIP-type (DIP) from Antirrhinum majus (Garden snapdragon).